The chain runs to 154 residues: 6,7-dimethyl-8-ribityllumazine synthase (154 aa).

Residues phenylalanine 22, 56–58 (SFE), and 81–83 (VLI) contribute to the 5-amino-6-(D-ribitylamino)uracil site. 86 to 87 (ET) is a (2S)-2-hydroxy-3-oxobutyl phosphate binding site. The active-site Proton donor is the histidine 89. A 5-amino-6-(D-ribitylamino)uracil-binding site is contributed by phenylalanine 114. Arginine 128 is a binding site for (2S)-2-hydroxy-3-oxobutyl phosphate.

The protein belongs to the DMRL synthase family.

The enzyme catalyses (2S)-2-hydroxy-3-oxobutyl phosphate + 5-amino-6-(D-ribitylamino)uracil = 6,7-dimethyl-8-(1-D-ribityl)lumazine + phosphate + 2 H2O + H(+). It functions in the pathway cofactor biosynthesis; riboflavin biosynthesis; riboflavin from 2-hydroxy-3-oxobutyl phosphate and 5-amino-6-(D-ribitylamino)uracil: step 1/2. In terms of biological role, catalyzes the formation of 6,7-dimethyl-8-ribityllumazine by condensation of 5-amino-6-(D-ribitylamino)uracil with 3,4-dihydroxy-2-butanone 4-phosphate. This is the penultimate step in the biosynthesis of riboflavin. The chain is 6,7-dimethyl-8-ribityllumazine synthase from Chlamydia caviae (strain ATCC VR-813 / DSM 19441 / 03DC25 / GPIC) (Chlamydophila caviae).